Consider the following 414-residue polypeptide: Serine hydroxymethyltransferase (414 aa).

(6S)-5,6,7,8-tetrahydrofolate is bound by residues Leu117 and 121–123 (GHL). Residue Lys226 is modified to N6-(pyridoxal phosphate)lysine. Residues Glu241 and 349–351 (TPF) each bind (6S)-5,6,7,8-tetrahydrofolate.

This sequence belongs to the SHMT family. Homodimer. It depends on pyridoxal 5'-phosphate as a cofactor.

It localises to the cytoplasm. It carries out the reaction (6R)-5,10-methylene-5,6,7,8-tetrahydrofolate + glycine + H2O = (6S)-5,6,7,8-tetrahydrofolate + L-serine. Its pathway is one-carbon metabolism; tetrahydrofolate interconversion. It functions in the pathway amino-acid biosynthesis; glycine biosynthesis; glycine from L-serine: step 1/1. Functionally, catalyzes the reversible interconversion of serine and glycine with tetrahydrofolate (THF) serving as the one-carbon carrier. Also exhibits THF-independent aldolase activity toward beta-hydroxyamino acids, producing glycine and aldehydes, via a retro-aldol mechanism. The protein is Serine hydroxymethyltransferase of Methanothrix thermoacetophila (strain DSM 6194 / JCM 14653 / NBRC 101360 / PT) (Methanosaeta thermophila).